Here is an 835-residue protein sequence, read N- to C-terminus: Protein translocase subunit SecA 1 (835 aa).

ATP is bound by residues Gln-85, 103–107 (GEGKT), and Asp-492. A disordered region spans residues 788 to 807 (VQGEAVHPSSDGEEAKKKPV). Zn(2+)-binding residues include Cys-819, Cys-821, Cys-830, and Cys-831.

The protein belongs to the SecA family. As to quaternary structure, monomer and homodimer. Part of the essential Sec protein translocation apparatus which comprises SecA, SecYEG and auxiliary proteins SecDF. Other proteins may also be involved. It depends on Zn(2+) as a cofactor.

It is found in the cell membrane. Its subcellular location is the cytoplasm. It catalyses the reaction ATP + H2O + cellular proteinSide 1 = ADP + phosphate + cellular proteinSide 2.. Functionally, part of the Sec protein translocase complex. Interacts with the SecYEG preprotein conducting channel. Has a central role in coupling the hydrolysis of ATP to the transfer of proteins into and across the cell membrane, serving as an ATP-driven molecular motor driving the stepwise translocation of polypeptide chains across the membrane. The protein is Protein translocase subunit SecA 1 of Bacillus anthracis.